A 356-amino-acid polypeptide reads, in one-letter code: Histidinol-phosphate aminotransferase 1 (356 aa).

Lys213 carries the post-translational modification N6-(pyridoxal phosphate)lysine.

Belongs to the class-II pyridoxal-phosphate-dependent aminotransferase family. Histidinol-phosphate aminotransferase subfamily. As to quaternary structure, homodimer. Requires pyridoxal 5'-phosphate as cofactor.

It carries out the reaction L-histidinol phosphate + 2-oxoglutarate = 3-(imidazol-4-yl)-2-oxopropyl phosphate + L-glutamate. The protein operates within amino-acid biosynthesis; L-histidine biosynthesis; L-histidine from 5-phospho-alpha-D-ribose 1-diphosphate: step 7/9. The protein is Histidinol-phosphate aminotransferase 1 (hisC1) of Bordetella parapertussis (strain 12822 / ATCC BAA-587 / NCTC 13253).